We begin with the raw amino-acid sequence, 733 residues long: Non-secreted LysM effector LCP1 (733 aa).

Positions 1 to 22 (MMRRPWLLSALVAWVKLPSVQG) are cleaved as a signal peptide. 2 LysM domains span residues 211 to 256 (SEYT…KLCI) and 261 to 309 (DVYV…TICI). 9 N-linked (GlcNAc...) asparagine glycosylation sites follow: asparagine 298, asparagine 304, asparagine 340, asparagine 350, asparagine 381, asparagine 432, asparagine 442, asparagine 455, and asparagine 538. The 47-residue stretch at 347–393 (LFHNVTAGDDCGTIGLKYSISLDDFIFLNSMIWPNCTNLWLRASYCV) folds into the LysM 3 domain. The span at 605 to 629 (SPITSSAPTSTTASSKTSSSAAQPT) shows a compositional bias: low complexity. A disordered region spans residues 605–637 (SPITSSAPTSTTASSKTSSSAAQPTNVSTDGTC). Asparagine 630 is a glycosylation site (N-linked (GlcNAc...) asparagine). 2 Chitin-binding type-1 domains span residues 634-680 (DGTC…KCDA) and 688-733 (DGTC…GVCT). 8 cysteine pairs are disulfide-bonded: cysteine 637–cysteine 654, cysteine 645–cysteine 660, cysteine 653–cysteine 667, cysteine 671–cysteine 678, cysteine 691–cysteine 708, cysteine 699–cysteine 714, cysteine 707–cysteine 721, and cysteine 725–cysteine 732.

It belongs to the secreted LysM effector family.

Its subcellular location is the secreted. The protein localises to the cell membrane. The protein resides in the vacuole. In terms of biological role, secreted effector that enables the plant pathogenic fungus to manipulate host defenses for successful infection. Not involved in host recognition and penetration but suppresses host cell death and promotes fumonisin biosynthesis while the pathogen colonizes maize kernels. The protein is Non-secreted LysM effector LCP1 of Gibberella moniliformis (strain M3125 / FGSC 7600) (Maize ear and stalk rot fungus).